Consider the following 202-residue polypeptide: Hypoxanthine-guanine phosphoribosyltransferase (202 aa).

Positions 66 and 67 each coordinate diphosphate. Mg(2+) is bound by residues Glu122 and Asp123. The active-site Proton acceptor is the Asp126. Residues Lys154, 175–176 (FV), and Asp182 contribute to the GMP site. Arg188 contacts diphosphate.

Belongs to the purine/pyrimidine phosphoribosyltransferase family. Homodimer and homotetramer in equilibrium. The presence or absence of divalent metal ions, as well as phosphate, can affect the oligomerization state of the enzyme. Likely functions as a tetramer (rather than a dimer) in its biological environment, which is the most active form. The dimeric structure is also active though ~50% of that of the tetramer. It depends on Mg(2+) as a cofactor.

Its subcellular location is the cytoplasm. The catalysed reaction is IMP + diphosphate = hypoxanthine + 5-phospho-alpha-D-ribose 1-diphosphate. It catalyses the reaction GMP + diphosphate = guanine + 5-phospho-alpha-D-ribose 1-diphosphate. It functions in the pathway purine metabolism; IMP biosynthesis via salvage pathway; IMP from hypoxanthine: step 1/1. Its pathway is purine metabolism; GMP biosynthesis via salvage pathway; GMP from guanine: step 1/1. Its activity is regulated as follows. Competitively inhibited by acyclic nucleoside phosphonates (ANPs) with Ki values as low as 0.69 uM. Prodrugs of these compounds arrest the growth of a virulent strain of M.tuberculosis with MIC50 values as low as 4.5 uM and possess low cytotoxicity in mammalian cells. Inhibited by pyrrolidine nucleoside bisphosphonates, which are also able to arrest the growth of virulent M.tuberculosis not only in its replicating phase but also in its latent phase, and to arrest the growth of M.tuberculosis in infected macrophages while having low cytotoxicity in mammalian cells. Functionally, purine salvage pathway enzyme that catalyzes the transfer of the ribosyl-5-phosphate group from 5-phospho-alpha-D-ribose 1-diphosphate (PRPP) to the N9 position of the 6-oxopurines hypoxanthine and guanine to form the corresponding ribonucleotides IMP (inosine 5'-monophosphate) and GMP (guanosine 5'-monophosphate), with the release of PPi. Thus, specifically recycles hypoxanthine and guanine imported from the external medium, and converts them to IMP and GMP, respectively. Cannot use xanthine as substrate. The chain is Hypoxanthine-guanine phosphoribosyltransferase from Mycobacterium tuberculosis (strain ATCC 25618 / H37Rv).